Here is a 109-residue protein sequence, read N- to C-terminus: Large ribosomal subunit protein uL24 (109 aa).

Belongs to the universal ribosomal protein uL24 family. In terms of assembly, part of the 50S ribosomal subunit.

Its function is as follows. One of two assembly initiator proteins, it binds directly to the 5'-end of the 23S rRNA, where it nucleates assembly of the 50S subunit. One of the proteins that surrounds the polypeptide exit tunnel on the outside of the subunit. This is Large ribosomal subunit protein uL24 from Desulforapulum autotrophicum (strain ATCC 43914 / DSM 3382 / VKM B-1955 / HRM2) (Desulfobacterium autotrophicum).